Consider the following 460-residue polypeptide: Arginine decarboxylase (460 aa).

Lysine 226 is subject to N6-(pyridoxal phosphate)lysine.

Belongs to the Orn/Lys/Arg decarboxylase class-I family. Pyridoxal 5'-phosphate is required as a cofactor.

It localises to the cytoplasm. It carries out the reaction L-arginine + H(+) = agmatine + CO2. The protein operates within amine and polyamine biosynthesis; agmatine biosynthesis; agmatine from L-arginine: step 1/1. In terms of biological role, catalyzes the formation of agmatine from arginine. The sequence is that of Arginine decarboxylase (speA) from Bacillus cereus (strain ATCC 14579 / DSM 31 / CCUG 7414 / JCM 2152 / NBRC 15305 / NCIMB 9373 / NCTC 2599 / NRRL B-3711).